Reading from the N-terminus, the 277-residue chain is Translation initiation factor 2 subunit alpha (277 aa).

The 72-residue stretch at Gly-22–Lys-93 folds into the S1 motif domain.

Belongs to the eIF-2-alpha family. Heterotrimer composed of an alpha, a beta and a gamma chain.

Functionally, eIF-2 functions in the early steps of protein synthesis by forming a ternary complex with GTP and initiator tRNA. The chain is Translation initiation factor 2 subunit alpha (eif2a) from Aeropyrum pernix (strain ATCC 700893 / DSM 11879 / JCM 9820 / NBRC 100138 / K1).